The chain runs to 472 residues: GTPase Der (472 aa).

EngA-type G domains follow at residues 3-166 (PIIA…IQNN) and 188-361 (IKLA…HCST). GTP-binding positions include 9 to 16 (GRPNVGKS), 56 to 60 (DTGGI), 118 to 121 (NKID), 194 to 201 (GSSNVGKS), 241 to 245 (DTAGL), and 306 to 309 (NKWD). The 85-residue stretch at 362 to 446 (KRISTALLTK…PIRIQFNEPA (85 aa)) folds into the KH-like domain.

Belongs to the TRAFAC class TrmE-Era-EngA-EngB-Septin-like GTPase superfamily. EngA (Der) GTPase family. In terms of assembly, associates with the 50S ribosomal subunit.

GTPase that plays an essential role in the late steps of ribosome biogenesis. This Baumannia cicadellinicola subsp. Homalodisca coagulata protein is GTPase Der.